The following is a 549-amino-acid chain: Urocanate hydratase (549 aa).

NAD(+) is bound by residues 46 to 47, Gln124, Glu190, Arg195, 236 to 237, 257 to 261, 267 to 268, and Tyr316; these read GG, NA, QTSAH, and YV. Cys404 is an active-site residue. Residue Gly486 coordinates NAD(+).

The protein belongs to the urocanase family. Requires NAD(+) as cofactor.

Its subcellular location is the cytoplasm. The enzyme catalyses 4-imidazolone-5-propanoate = trans-urocanate + H2O. Its pathway is amino-acid degradation; L-histidine degradation into L-glutamate; N-formimidoyl-L-glutamate from L-histidine: step 2/3. Catalyzes the conversion of urocanate to 4-imidazolone-5-propionate. The protein is Urocanate hydratase of Thermoanaerobacter pseudethanolicus (strain ATCC 33223 / 39E) (Clostridium thermohydrosulfuricum).